The sequence spans 533 residues: Glycogen synthase (533 aa).

Residue lysine 12 coordinates ADP-alpha-D-glucose. The disordered stretch occupies residues alanine 497–lysine 533. Positions alanine 512–alanine 525 are enriched in basic and acidic residues.

Belongs to the glycosyltransferase 1 family. Bacterial/plant glycogen synthase subfamily.

The catalysed reaction is [(1-&gt;4)-alpha-D-glucosyl](n) + ADP-alpha-D-glucose = [(1-&gt;4)-alpha-D-glucosyl](n+1) + ADP + H(+). It functions in the pathway glycan biosynthesis; glycogen biosynthesis. In terms of biological role, synthesizes alpha-1,4-glucan chains using ADP-glucose. The polypeptide is Glycogen synthase (Burkholderia thailandensis (strain ATCC 700388 / DSM 13276 / CCUG 48851 / CIP 106301 / E264)).